Here is a 542-residue protein sequence, read N- to C-terminus: MTFSEILDRVGSMGHFQFLHVAILGLPILNMANHNLLQIFTAATPVHHCRPPHNASTGPWVLPMGPNGKPERCLRFVHPPNASLPNDTQRAMEPCLDGWVYNSTKDSIVTEWDLVCNSNKLKEMAQSIFMAGILIGGLVLGDLSDRFGRRPILTCSYLLLAASGSGAAFSPTFPIYMVFRFLCGFGISGITLSTVILNVEWVPTRMRAIMSTALGYCYTFGQFILPGLAYAIPQWRWLQLTVSIPFFVFFLSSWWTPESIRWLVLSGKSSKALKILRRVAVFNGKKEEGERLSLEELKLNLQKEISLAKAKYTASDLFRIPMLRRMTFCLSLAWFATGFAYYSLAMGVEEFGVNLYILQIIFGGVDVPAKFITILSLSYLGRHTTQAAALLLAGGAILALTFVPLDLQTVRTVLAVFGKGCLSSSFSCLFLYTSELYPTVIRQTGMGVSNLWTRVGSMVSPLVKITGEVQPFIPNIIYGITALLGGSAALFLPETLNQPLPETIEDLENWSLRAKKPKQEPEVEKASQRIPLQPHGPGLGSS.

The Cytoplasmic segment spans residues 1 to 9 (MTFSEILDR). Ser-4 is subject to Phosphoserine. The helical transmembrane segment at 10–30 (VGSMGHFQFLHVAILGLPILN) threads the bilayer. The Extracellular portion of the chain corresponds to 31 to 123 (MANHNLLQIF…LVCNSNKLKE (93 aa)). N-linked (GlcNAc...) asparagine glycans are attached at residues Asn-86 and Asn-102. A helical transmembrane segment spans residues 124 to 144 (MAQSIFMAGILIGGLVLGDLS). At 145-154 (DRFGRRPILT) the chain is on the cytoplasmic side. Residues 155–175 (CSYLLLAASGSGAAFSPTFPI) traverse the membrane as a helical segment. A topological domain (extracellular) is located at residue Tyr-176. A helical transmembrane segment spans residues 177–197 (MVFRFLCGFGISGITLSTVIL). The Cytoplasmic portion of the chain corresponds to 198–212 (NVEWVPTRMRAIMST). The helical transmembrane segment at 213-233 (ALGYCYTFGQFILPGLAYAIP) threads the bilayer. Residues 234–236 (QWR) are Extracellular-facing. The chain crosses the membrane as a helical span at residues 237-257 (WLQLTVSIPFFVFFLSSWWTP). The Cytoplasmic segment spans residues 258–327 (ESIRWLVLSG…FRIPMLRRMT (70 aa)). A helical membrane pass occupies residues 328–348 (FCLSLAWFATGFAYYSLAMGV). The Extracellular segment spans residues 349–354 (EEFGVN). Residues 355-375 (LYILQIIFGGVDVPAKFITIL) traverse the membrane as a helical segment. Topologically, residues 376–386 (SLSYLGRHTTQ) are cytoplasmic. Residues 387-407 (AAALLLAGGAILALTFVPLDL) form a helical membrane-spanning segment. At 408-411 (QTVR) the chain is on the extracellular side. Residues 412-432 (TVLAVFGKGCLSSSFSCLFLY) traverse the membrane as a helical segment. Residues 433 to 471 (TSELYPTVIRQTGMGVSNLWTRVGSMVSPLVKITGEVQP) lie on the Cytoplasmic side of the membrane. Residues 472–492 (FIPNIIYGITALLGGSAALFL) traverse the membrane as a helical segment. Residues 493–542 (PETLNQPLPETIEDLENWSLRAKKPKQEPEVEKASQRIPLQPHGPGLGSS) are Extracellular-facing. A disordered region spans residues 515–542 (KKPKQEPEVEKASQRIPLQPHGPGLGSS). Basic and acidic residues predominate over residues 517–527 (PKQEPEVEKAS).

The protein belongs to the major facilitator (TC 2.A.1) superfamily. Organic cation transporter (TC 2.A.1.19) family. Strongly expressed in kidney. Weaker expression in brain and skeletal muscle. Expressed in adrenal glands.

Its subcellular location is the basolateral cell membrane. The enzyme catalyses estrone 3-sulfate(out) + glutarate(in) = estrone 3-sulfate(in) + glutarate(out). It carries out the reaction estrone 3-sulfate(in) + 2-oxoglutarate(out) = estrone 3-sulfate(out) + 2-oxoglutarate(in). It catalyses the reaction glutarate(in) + 2-oxoglutarate(out) = glutarate(out) + 2-oxoglutarate(in). The catalysed reaction is urate(in) + 2-oxoglutarate(out) = urate(out) + 2-oxoglutarate(in). The enzyme catalyses taurocholate(out) + glutarate(in) = taurocholate(in) + glutarate(out). It carries out the reaction dehydroepiandrosterone 3-sulfate(out) + glutarate(in) = dehydroepiandrosterone 3-sulfate(in) + glutarate(out). It catalyses the reaction prostaglandin F2alpha(out) + glutarate(in) = prostaglandin F2alpha(in) + glutarate(out). The catalysed reaction is prostaglandin F2alpha(out) + 2-oxoglutarate(in) = prostaglandin F2alpha(in) + 2-oxoglutarate(out). The enzyme catalyses (R)-carnitine(out) + 2-oxoglutarate(in) = (R)-carnitine(in) + 2-oxoglutarate(out). It carries out the reaction glutarate(in) + (R)-carnitine(out) = glutarate(out) + (R)-carnitine(in). It catalyses the reaction prostaglandin E2(out) + 2-oxoglutarate(in) = prostaglandin E2(in) + 2-oxoglutarate(out). The catalysed reaction is prostaglandin E2(out) + glutarate(in) = prostaglandin E2(in) + glutarate(out). The enzyme catalyses urate(in) + glutarate(out) = urate(out) + glutarate(in). It carries out the reaction taurocholate(out) + 2-oxoglutarate(in) = taurocholate(in) + 2-oxoglutarate(out). It catalyses the reaction dehydroepiandrosterone 3-sulfate(out) + 2-oxoglutarate(in) = dehydroepiandrosterone 3-sulfate(in) + 2-oxoglutarate(out). The catalysed reaction is kynurenate(out) + a dicarboxylate(in) = kynurenate(in) + a dicarboxylate(out). The enzyme catalyses (indol-3-yl)acetate(out) + a dicarboxylate(in) = (indol-3-yl)acetate(in) + a dicarboxylate(out). It carries out the reaction indoxyl sulfate(out) + a dicarboxylate(in) = indoxyl sulfate(in) + a dicarboxylate(out). It catalyses the reaction N-benzoylglycine(out) + a dicarboxylate(in) = N-benzoylglycine(in) + a dicarboxylate(out). The catalysed reaction is 3-carboxy-4-methyl-5-propyl-2-furanpropanoate(out) + a dicarboxylate(in) = 3-carboxy-4-methyl-5-propyl-2-furanpropanoate(in) + a dicarboxylate(out). The enzyme catalyses (6R)-L-erythro-5,6,7,8-tetrahydrobiopterin(out) + a dicarboxylate(in) = (6R)-L-erythro-5,6,7,8-tetrahydrobiopterin(in) + a dicarboxylate(out). It carries out the reaction L-erythro-7,8-dihydrobiopterin(out) + a dicarboxylate(in) = L-erythro-7,8-dihydrobiopterin(in) + a dicarboxylate(out). It catalyses the reaction L-sepiapterin(out) + a dicarboxylate(in) = L-sepiapterin(in) + a dicarboxylate(out). Functionally, functions as an organic anion/dicarboxylate exchanger that couples organic anion uptake indirectly to the sodium gradient. Transports organic anions such as estrone 3-sulfate (E1S) and urate in exchange for dicarboxylates such as glutarate or ketoglutarate (2-oxoglutarate). Plays an important role in the excretion of endogenous and exogenous organic anions, especially from the kidney and the brain. E1S transport is pH- and chloride-dependent and may also involve E1S/cGMP exchange. Responsible for the transport of prostaglandin E2 (PGE2) and prostaglandin F2(alpha) (PGF2(alpha)) in the basolateral side of the renal tubule. Involved in the transport of neuroactive tryptophan metabolites kynurenate and xanthurenate. Functions as a biopterin transporters involved in the uptake and the secretion of coenzymes tetrahydrobiopterin (BH4), dihydrobiopterin (BH2) and sepiapterin to urine, thereby determining baseline levels of blood biopterins. May be involved in the basolateral transport of steviol, a metabolite of the popular sugar substitute stevioside. May participate in the detoxification/ renal excretion of drugs and xenobiotics, such as the histamine H(2)-receptor antagonists fexofenadine and cimetidine, the antibiotic benzylpenicillin (PCG), the anionic herbicide 2,4-dichloro-phenoxyacetate (2,4-D), the diagnostic agent p-aminohippurate (PAH), the antiviral acyclovir (ACV), and the mycotoxin ochratoxin (OTA), by transporting these exogenous organic anions across the cell membrane in exchange for dicarboxylates such as 2-oxoglutarate. Contributes to the renal uptake of potent uremic toxins (indoxyl sulfate (IS), indole acetate (IA), hippurate/N-benzoylglycine (HA) and 3-carboxy-4-methyl-5-propyl-2-furanpropionate (CMPF)), pravastatin, PCG, E1S and dehydroepiandrosterone sulfate (DHEAS), and is partly involved in the renal uptake of temocaprilat (an angiotensin-converting enzyme (ACE) inhibitor). May contribute to the release of cortisol in the adrenals. Involved in one of the detoxification systems on the choroid plexus (CP), removes substrates such as E1S or taurocholate (TC), PCG, 2,4-D and PAH, from the cerebrospinal fluid (CSF) to the blood for eventual excretion in urine and bile. Also contributes to the uptake of several other organic compounds such as the prostanoids prostaglandin E(2) and prostaglandin F(2-alpha), L-carnitine, and the therapeutic drugs allopurinol, 6-mercaptopurine (6-MP) and 5-fluorouracil (5-FU). Mediates the transport of PAH, PCG, and the statins pravastatin and pitavastatin, from the cerebrum into the blood circulation across the blood-brain barrier (BBB). In summary, plays a role in the efflux of drugs and xenobiotics, helping reduce their undesired toxicological effects on the body. This Homo sapiens (Human) protein is Organic anion transporter 3.